Consider the following 149-residue polypeptide: MGLEKSFILFSLLVLVLGWVQPSLGRESSADKFKRQHMDTEGSSKSSPTYCNQMMKRRDMTNGSCKPVNTFVHEPLEDVQAICSQGQVTCKNGKSNCYKSSSTLHITDCRLKGSSKYPNCDYTTTDSQKQLIIACDGNPYVPVHLDDSV.

A signal peptide spans 1–25 (MGLEKSFILFSLLVLVLGWVQPSLG). Substrate is bound by residues K32 and R35. H37 serves as the catalytic Proton acceptor. 4 disulfide bridges follow: C51-C109, C65-C120, C83-C135, and C90-C97. Substrate contacts are provided by residues 66 to 70 (KPVNT), K91, and R110. Catalysis depends on H144, which acts as the Proton donor.

The protein belongs to the pancreatic ribonuclease family. As to quaternary structure, monomer.

The protein localises to the secreted. It carries out the reaction an [RNA] containing cytidine + H2O = an [RNA]-3'-cytidine-3'-phosphate + a 5'-hydroxy-ribonucleotide-3'-[RNA].. The enzyme catalyses an [RNA] containing uridine + H2O = an [RNA]-3'-uridine-3'-phosphate + a 5'-hydroxy-ribonucleotide-3'-[RNA].. Functionally, endonuclease that catalyzes the cleavage of RNA on the 3' side of pyrimidine nucleotides. Acts on single-stranded and double-stranded RNA. The chain is Ribonuclease pancreatic alpha-type from Rattus fuscipes (Bush rat).